The primary structure comprises 338 residues: Tagatose 1,6-diphosphate aldolase (338 aa).

This sequence belongs to the aldolase LacD family.

The catalysed reaction is D-tagatofuranose 1,6-bisphosphate = D-glyceraldehyde 3-phosphate + dihydroxyacetone phosphate. The protein operates within carbohydrate metabolism; D-tagatose 6-phosphate degradation; D-glyceraldehyde 3-phosphate and glycerone phosphate from D-tagatose 6-phosphate: step 2/2. The protein is Tagatose 1,6-diphosphate aldolase of Listeria monocytogenes serotype 4b (strain CLIP80459).